The chain runs to 684 residues: Agnestins biosynthesis cluster transcription factor AgnL11 (684 aa).

The zn(2)-C6 fungal-type DNA-binding region spans 25–51; the sequence is CHFCRTKKLKCDRRFPCSNCRARRLSC. The stretch at 76–103 forms a coiled coil; it reads NEELSENINELKARLQRLEELISVNAEE. The tract at residues 601–644 is disordered; that stretch reads KGSASARKDKNPIHGDTDRATPPGSSNLPQHDKSSSSSPAPPVW. Residues 606-619 show a composition bias toward basic and acidic residues; it reads ARKDKNPIHGDTDR.

The protein localises to the nucleus. Transcription factor that regulates the expression of the gene cluster that mediates the biosynthesis of agnestins, dihydroxy-xanthone metabolites. This Paecilomyces divaricatus (Penicillium divaricatum) protein is Agnestins biosynthesis cluster transcription factor AgnL11.